The sequence spans 151 residues: Neuroglobin (151 aa).

The Globin domain maps to 1–149 (MELPEPELIR…VVQAMSRGWG (149 aa)). 2 residues coordinate heme b: His64 and His96.

Belongs to the globin family. Monomer. Homodimer and homotetramer; disulfide-linked. Mainly monomeric but also detected as part of homodimers and homotetramers. Interacts with 14-3-3 proteins; regulates the phosphorylation of NGB. Could interact (ferrous form) with G-alpha(i) proteins (GTP-bound form). Phosphorylated during hypoxia by ERK1/ERK2. Phosphorylation regulates the heme pocket hexacoordination preventing the association of His-64 with the heme metal center. Thereby, promotes the access of dioxygen and nitrite to the heme and stimulates the nitrite reductase activity. Phosphorylation during hypoxia is stabilized by 14-3-3 proteins.

The protein resides in the cytoplasm. It is found in the cytosol. Its subcellular location is the mitochondrion matrix. It carries out the reaction Fe(III)-heme b-[protein] + nitric oxide + H2O = Fe(II)-heme b-[protein] + nitrite + 2 H(+). In terms of biological role, monomeric globin with a bis-histidyl six-coordinate heme-iron atom through which it can bind dioxygen, carbon monoxide and nitric oxide. Could help transport oxygen and increase its availability to the metabolically active neuronal tissues, though its low quantity in tissues as well as its high affinity for dioxygen, which may limit its oxygen-releasing ability, argue against it. The ferrous/deoxygenated form exhibits a nitrite reductase activity and it could produce nitric oxide which in turn inhibits cellular respiration in response to hypoxia. In its ferrous/deoxygenated state, it may also exhibit GDI (Guanine nucleotide Dissociation Inhibitor) activity toward heterotrimeric G-alpha proteins, thereby regulating signal transduction to facilitate neuroprotective responses in the wake of hypoxia and associated oxidative stress. The polypeptide is Neuroglobin (Bos taurus (Bovine)).